Reading from the N-terminus, the 488-residue chain is Serine/threonine-protein kinase haspin homolog hrk1 (488 aa).

The 333-residue stretch at 156-488 (TFEIQKIGEA…SLLNWVRQKY (333 aa)) folds into the Protein kinase domain. ATP is bound by residues 162-170 (IGEASYSEV) and Lys184. Asp305 acts as the Proton acceptor in catalysis.

This sequence belongs to the protein kinase superfamily. Ser/Thr protein kinase family. Haspin subfamily. As to quaternary structure, interacts with pds5 and swi6.

It is found in the cytoplasm. The protein localises to the chromosome. It catalyses the reaction L-seryl-[protein] + ATP = O-phospho-L-seryl-[protein] + ADP + H(+). The enzyme catalyses L-threonyl-[protein] + ATP = O-phospho-L-threonyl-[protein] + ADP + H(+). Serine/threonine haspin-like protein kinase involved in cell cycle regulation. Acts in chromosomal passenger complex (CPC) targeting to centromeres by phosphorylating histone H3 at 'Thr3' (H3T3ph). This Schizosaccharomyces pombe (strain 972 / ATCC 24843) (Fission yeast) protein is Serine/threonine-protein kinase haspin homolog hrk1 (hrk1).